Consider the following 135-residue polypeptide: Ig heavy chain V region XIG14 (135 aa).

Positions 1–18 (DFIIFFIFMFFSPSCILS) are cleaved as a signal peptide. Residues 20–128 (TLQESGPGTV…GYNFDYWGQG (109 aa)) form the Ig-like domain.

This is Ig heavy chain V region XIG14 from Xenopus laevis (African clawed frog).